Consider the following 481-residue polypeptide: Deoxyribodipyrimidine photo-lyase (481 aa).

One can recognise a Photolyase/cryptochrome alpha/beta domain in the interval 1 to 136 (MQLFWHRRDL…AHAQFHDAVH (136 aa)). Y228 lines the FAD pocket. R232 is a DNA binding site. 240 to 244 (TSRLS) contributes to the FAD binding site. 2 interaction with DNA regions span residues 283–290 (QLAWREFY) and 349–350 (NR). 380–382 (DHD) serves as a coordination point for FAD. Q412 contacts DNA.

This sequence belongs to the DNA photolyase class-1 family. Monomer. Requires FAD as cofactor. Coenzyme F420-(gamma-Glu)n serves as cofactor.

The catalysed reaction is cyclobutadipyrimidine (in DNA) = 2 pyrimidine residues (in DNA).. In terms of biological role, involved in repair of UV radiation-induced DNA damage. Catalyzes the light-dependent monomerization (300-600 nm) of cyclobutyl pyrimidine dimers (in cis-syn configuration), which are formed between adjacent bases on the same DNA strand upon exposure to ultraviolet radiation. The polypeptide is Deoxyribodipyrimidine photo-lyase (phr) (Halobacterium salinarum (strain ATCC 700922 / JCM 11081 / NRC-1) (Halobacterium halobium)).